The chain runs to 122 residues: FMN-binding protein (122 aa).

As to quaternary structure, monomer and homodimer. FMN serves as cofactor.

The protein resides in the cytoplasm. Functions as a redox protein with a potential of -325 mV. The chain is FMN-binding protein from Nitratidesulfovibrio vulgaris (strain DSM 19637 / Miyazaki F) (Desulfovibrio vulgaris).